Reading from the N-terminus, the 394-residue chain is NAD(P)H-quinone oxidoreductase subunit H (394 aa).

It belongs to the complex I 49 kDa subunit family. In terms of assembly, NDH-1 can be composed of about 15 different subunits; different subcomplexes with different compositions have been identified which probably have different functions.

The protein resides in the cellular thylakoid membrane. The catalysed reaction is a plastoquinone + NADH + (n+1) H(+)(in) = a plastoquinol + NAD(+) + n H(+)(out). It catalyses the reaction a plastoquinone + NADPH + (n+1) H(+)(in) = a plastoquinol + NADP(+) + n H(+)(out). Functionally, NDH-1 shuttles electrons from an unknown electron donor, via FMN and iron-sulfur (Fe-S) centers, to quinones in the respiratory and/or the photosynthetic chain. The immediate electron acceptor for the enzyme in this species is believed to be plastoquinone. Couples the redox reaction to proton translocation, and thus conserves the redox energy in a proton gradient. Cyanobacterial NDH-1 also plays a role in inorganic carbon-concentration. In Prochlorococcus marinus (strain MIT 9313), this protein is NAD(P)H-quinone oxidoreductase subunit H.